Consider the following 555-residue polypeptide: E3 ubiquitin-protein ligase NEURL1B (555 aa).

Residues 38 to 194 form the NHR 1 domain; it reads APRFHAQAKG…ITDEVQLLES (157 aa). T199 carries the phosphothreonine modification. Residues 279 to 433 form the NHR 2 domain; that stretch reads DLRFHATRGP…GVAGQLRLLG (155 aa). The tract at residues 436-493 is disordered; it reads QSSPATTTPSGSLSGSQDDSDSDMTFSVNQSSSASESSLVTAPSSPLSPPVSPVFSPP. Over residues 462 to 480 the composition is skewed to low complexity; the sequence is SVNQSSSASESSLVTAPSS. Residues 481–493 show a composition bias toward pro residues; that stretch reads PLSPPVSPVFSPP. An RING-type zinc finger spans residues 503–543; sequence CTVCFDGEVDTVIYTCGHMCLCHSCGLRLKRQARACCPICR.

As to quaternary structure, interacts with JAG1, DLL1 and DLL4. Highest expression in brain, prostate and small intestine. In the brain the levels are higher in fetal than in adult stage. In the adult brain the highest levels are detected in the olfactory system, cerebellar cortex, optic nerve and the frontal lobe.

It is found in the cytoplasm. The catalysed reaction is S-ubiquitinyl-[E2 ubiquitin-conjugating enzyme]-L-cysteine + [acceptor protein]-L-lysine = [E2 ubiquitin-conjugating enzyme]-L-cysteine + N(6)-ubiquitinyl-[acceptor protein]-L-lysine.. The protein operates within protein modification; protein ubiquitination. In terms of biological role, E3 ubiquitin-protein ligase involved in regulation of the Notch pathway through influencing the stability and activity of several Notch ligands. The sequence is that of E3 ubiquitin-protein ligase NEURL1B (NEURL1B) from Homo sapiens (Human).